Here is a 120-residue protein sequence, read N- to C-terminus: Protein FAM241B (120 aa).

Positions 12-59 (QDDDPRVRTTTQHRSSSSQQGFFNRGHGAPPGGPGPRQQQAGARLGAA) are disordered. 2 stretches are compositionally biased toward low complexity: residues 19–39 (RTTTQHRSSSSQQGFFNRGHG) and 47–59 (PRQQQAGARLGAA). A Phosphoserine modification is found at serine 61. The helical transmembrane segment at 91 to 111 (ILLLFLLMMLGVRGLLLVGLV) threads the bilayer.

The protein belongs to the FAM241 family.

It localises to the membrane. In terms of biological role, may play a role in lysosome homeostasis. The polypeptide is Protein FAM241B (Mus musculus (Mouse)).